A 323-amino-acid polypeptide reads, in one-letter code: Prenyl transferase (323 aa).

Isopentenyl diphosphate-binding residues include K46, R49, and H81. Residues D88 and D92 each coordinate Mg(2+). An an all-trans-polyprenyl diphosphate-binding site is contributed by R97. R98 is an isopentenyl diphosphate binding site. Positions 174, 175, and 212 each coordinate an all-trans-polyprenyl diphosphate.

The protein belongs to the FPP/GGPP synthase family. The cofactor is Mg(2+).

In terms of biological role, possible role in synthesis of the nonaprenyl side chain of plastoquinone or in synthesis of other prenyl chains such as undekaprenyl pyrophosphate. The chain is Prenyl transferase (preA) from Synechocystis sp. (strain ATCC 27184 / PCC 6803 / Kazusa).